The sequence spans 350 residues: Inhibitor of nuclear factor kappa-B kinase-interacting protein (350 aa).

A compositionally biased stretch (basic residues) spans 1 to 11 (MSEVKSRKKSG). Residues 1–39 (MSEVKSRKKSGPKGAPAAEPGKRSEGGKTPVARSSGGGG) form a disordered region. The chain crosses the membrane as a helical span at residues 46 to 62 (CLSLLSLGTCLGLAWFV). A glycan (N-linked (GlcNAc...) asparagine) is linked at asparagine 144. A coiled-coil region spans residues 184 to 217 (GLVTDVISLTDSVQELENKIEKVEKNTVKNIGDL). N-linked (GlcNAc...) asparagine glycosylation is present at asparagine 328.

Post-translationally, N-glycosylated. Isoform 4 is glycosylated at Asn-154. In terms of tissue distribution, expressed in vein endothelial cells. Isoform 4 is expressed in lung, kidney, spleen, thymus and skeletal muscle.

The protein localises to the endoplasmic reticulum membrane. Functionally, target of p53/TP53 with pro-apoptotic function. This is Inhibitor of nuclear factor kappa-B kinase-interacting protein (IKBIP) from Homo sapiens (Human).